Here is a 358-residue protein sequence, read N- to C-terminus: Uroporphyrinogen decarboxylase (358 aa).

Residues 36–40 (RQAGR), aspartate 85, tyrosine 160, serine 215, and histidine 338 contribute to the substrate site.

The protein belongs to the uroporphyrinogen decarboxylase family. In terms of assembly, homodimer.

It localises to the cytoplasm. It carries out the reaction uroporphyrinogen III + 4 H(+) = coproporphyrinogen III + 4 CO2. The protein operates within porphyrin-containing compound metabolism; protoporphyrin-IX biosynthesis; coproporphyrinogen-III from 5-aminolevulinate: step 4/4. Its function is as follows. Catalyzes the decarboxylation of four acetate groups of uroporphyrinogen-III to yield coproporphyrinogen-III. This Corynebacterium glutamicum (strain R) protein is Uroporphyrinogen decarboxylase.